We begin with the raw amino-acid sequence, 132 residues long: uncharacterized protein (132 aa).

This sequence to M.jannaschii MJ0661.

This is an uncharacterized protein from Helicobacter pylori (strain ATCC 700392 / 26695) (Campylobacter pylori).